The primary structure comprises 166 residues: NAD(P)H-quinone oxidoreductase subunit I, chloroplastic (166 aa).

2 4Fe-4S ferredoxin-type domains span residues 55-84 (GRIH…VDWK) and 95-124 (LNYS…MTEE). [4Fe-4S] cluster is bound by residues Cys-64, Cys-67, Cys-70, Cys-74, Cys-104, Cys-107, Cys-110, and Cys-114.

Belongs to the complex I 23 kDa subunit family. In terms of assembly, NDH is composed of at least 16 different subunits, 5 of which are encoded in the nucleus. [4Fe-4S] cluster serves as cofactor.

The protein resides in the plastid. Its subcellular location is the chloroplast thylakoid membrane. It carries out the reaction a plastoquinone + NADH + (n+1) H(+)(in) = a plastoquinol + NAD(+) + n H(+)(out). The enzyme catalyses a plastoquinone + NADPH + (n+1) H(+)(in) = a plastoquinol + NADP(+) + n H(+)(out). Functionally, NDH shuttles electrons from NAD(P)H:plastoquinone, via FMN and iron-sulfur (Fe-S) centers, to quinones in the photosynthetic chain and possibly in a chloroplast respiratory chain. The immediate electron acceptor for the enzyme in this species is believed to be plastoquinone. Couples the redox reaction to proton translocation, and thus conserves the redox energy in a proton gradient. The polypeptide is NAD(P)H-quinone oxidoreductase subunit I, chloroplastic (Melampodium leucanthum (Black foot daisy)).